Here is a 258-residue protein sequence, read N- to C-terminus: tRNA pseudouridine synthase A (258 aa).

Aspartate 54 serves as the catalytic Nucleophile. Tyrosine 112 contributes to the substrate binding site.

It belongs to the tRNA pseudouridine synthase TruA family. In terms of assembly, homodimer.

The catalysed reaction is uridine(38/39/40) in tRNA = pseudouridine(38/39/40) in tRNA. Functionally, formation of pseudouridine at positions 38, 39 and 40 in the anticodon stem and loop of transfer RNAs. The protein is tRNA pseudouridine synthase A of Geobacillus kaustophilus (strain HTA426).